The chain runs to 79 residues: Small ribosomal subunit protein bS18 (79 aa).

This sequence belongs to the bacterial ribosomal protein bS18 family. In terms of assembly, part of the 30S ribosomal subunit. Forms a tight heterodimer with protein bS6.

Functionally, binds as a heterodimer with protein bS6 to the central domain of the 16S rRNA, where it helps stabilize the platform of the 30S subunit. The chain is Small ribosomal subunit protein bS18 from Bacillus velezensis (strain DSM 23117 / BGSC 10A6 / LMG 26770 / FZB42) (Bacillus amyloliquefaciens subsp. plantarum).